The following is a 64-amino-acid chain: MSCLPVFVILLLLTASGPSVDARLKTKDDVPLSSFRDNAKSTLRRLQDKSACCGYKLCSPCGQA.

A signal peptide spans M1–A22. Residues R23–K49 constitute a propeptide that is removed on maturation. At P60 the chain carries 4-hydroxyproline; partial; in major form.

It belongs to the conotoxin T superfamily. In terms of processing, contains 2 disulfide bonds. Expressed by the venom duct.

It localises to the secreted. Probable toxin that inhibits ion channels. This chain is Conotoxin Am1.1, found in Conus amadis (Amadis cone).